The sequence spans 439 residues: Protein pop-1 (439 aa).

The segment at 1–38 (MMADEELGDEVKVFRRDEDADDDPMISGETSEQQLADD) is disordered. Over residues 9–18 (DEVKVFRRDE) the composition is skewed to basic and acidic residues. Residues 87–138 (SGLPIMFPMVVPQYLSPNPNINMMNMMTMRAAMAGAPLSPAFPAMFSPNPLF) are involved in nuclear asymmetry. A Phosphoserine; by LIT1 modification is found at serine 125. Residues 199-269 (IKKPLNAFMW…SHKEKYPQWS (71 aa)) constitute a DNA-binding region (HMG box). Residues 254–265 (AKKDRESHKEKY) show a composition bias toward basic and acidic residues. Disordered stretches follow at residues 254–298 (AKKD…NNDQ), 329–365 (RSGS…MPMN), and 385–439 (SAHL…VCTL). Basic residues predominate over residues 277 to 286 (NKKKPKRKRD). Low complexity-rich tracts occupy residues 346-365 (GCSS…MPMN) and 385-400 (SAHL…SGTS). The segment covering 409–420 (SESDVDEDEDID) has biased composition (acidic residues). The span at 422 to 439 (TITQQTQEYIMQESVCTL) shows a compositional bias: polar residues.

This sequence belongs to the TCF/LEF family. As to quaternary structure, interacts with hda-1. Interacts with bar-1. Interacts with par-5; the interaction is direct and is enhanced by lit-1-mediated pop-1 phosphorylation. The interaction also leads to the subsequent nuclear export of pop-1. Interacts (when phosphorylated on Ser-125) with lit-1; the interaction is dependent on the beta-catenin-lit-1 complex. Interacts with wrm-1. Phosphorylated on Ser-125 by lit-1 in the beta-catenin-lit-1 complex. Phosphorylation promotes the interaction of pop-1 and par-5 and the subsequent translocation of pop-1 from the nucleus to the cytoplasm.

The protein resides in the nucleus. Its subcellular location is the cytoplasm. Part of the Wnt signaling pathway essential for the specification of the mesodermal cell fate in early embryos. Required for asymmetrical division of somatic gonadal precursor descendants which initiate axis formation required to control organ shape. Similarly, involved in asymmetrical division of seam cells, a stem cell-like lineage. Represses expression of target genes via its interaction with hda-1 histone deacetylase. Required for specification of the M lineage-derived coelomocyte and sex myoblast fate. Regulates coelomocyte fate by positively regulating proliferation and ceh-34 and possibly eya-1 expression in M.dlpa and M.drpa precursors. The protein is Protein pop-1 of Caenorhabditis briggsae.